The chain runs to 532 residues: Fatty-acid amide hydrolase 2-A (532 aa).

A helical membrane pass occupies residues 9-29 (FLGRLLRAVVWILFAAFKLFA). Catalysis depends on charge relay system residues lysine 129 and serine 204. Serine 228 functions as the Acyl-ester intermediate in the catalytic mechanism.

Belongs to the amidase family.

It localises to the membrane. The catalysed reaction is N-(5Z,8Z,11Z,14Z-eicosatetraenoyl)-ethanolamine + H2O = ethanolamine + (5Z,8Z,11Z,14Z)-eicosatetraenoate. It carries out the reaction (9Z)-octadecenamide + H2O = (9Z)-octadecenoate + NH4(+). In Danio rerio (Zebrafish), this protein is Fatty-acid amide hydrolase 2-A (faah2a).